Consider the following 389-residue polypeptide: LL-diaminopimelate aminotransferase (389 aa).

Positions 16 and 41 each coordinate substrate. Pyridoxal 5'-phosphate is bound by residues Tyr-70, 104–105, Tyr-129, Asn-179, Tyr-210, and 239–241; these read SK and SLS. Substrate is bound by residues Lys-105, Tyr-129, and Asn-179. Lys-242 carries the post-translational modification N6-(pyridoxal phosphate)lysine. Arg-250 is a binding site for pyridoxal 5'-phosphate. Arg-369 is a binding site for substrate.

This sequence belongs to the class-I pyridoxal-phosphate-dependent aminotransferase family. LL-diaminopimelate aminotransferase subfamily. Homodimer. Pyridoxal 5'-phosphate is required as a cofactor.

It catalyses the reaction (2S,6S)-2,6-diaminopimelate + 2-oxoglutarate = (S)-2,3,4,5-tetrahydrodipicolinate + L-glutamate + H2O + H(+). It functions in the pathway amino-acid biosynthesis; L-lysine biosynthesis via DAP pathway; LL-2,6-diaminopimelate from (S)-tetrahydrodipicolinate (aminotransferase route): step 1/1. Involved in the synthesis of meso-diaminopimelate (m-DAP or DL-DAP), required for both lysine and peptidoglycan biosynthesis. Catalyzes the direct conversion of tetrahydrodipicolinate to LL-diaminopimelate. In Nitratidesulfovibrio vulgaris (strain DSM 19637 / Miyazaki F) (Desulfovibrio vulgaris), this protein is LL-diaminopimelate aminotransferase.